A 408-amino-acid chain; its full sequence is BRCA1-A complex subunit Abraxas 1 (408 aa).

Residues 7–155 (TAVMSGFVFG…KSTHRLEYAL (149 aa)) form the MPN domain. A coiled-coil region spans residues 210 to 273 (ALAEVNRISN…EETGNKVSEA (64 aa)). Residues 360–372 (LQLQKQHSQNGDS) are compositionally biased toward polar residues. The interval 360–408 (LQLQKQHSQNGDSEGSDSERPLCNSGTETDGDILESLHMDVSRSKSPIF) is disordered. Residue S405 is modified to Phosphoserine. A pSXXF motif motif is present at residues 405-408 (SPIF).

This sequence belongs to the FAM175 family. Abraxas subfamily. In terms of assembly, component of the BRCA1-A complex. Component of the BRISC complex. Interacts directly (when phosphorylated at Ser-405) with brca1. Homodimer. The phosphorylated homodimer can interact directly with two brca1 chains, giving rise to a heterotetramer. Phosphorylation of Ser-405 of the pSXXF motif by ATM or ATR constitutes a specific recognition motif for the BRCT domain of BRCA1.

Its subcellular location is the nucleus. In terms of biological role, involved in DNA damage response and double-strand break (DSB) repair. Component of the BRCA1-A complex, acting as a central scaffold protein that assembles the various components of the complex and mediates the recruitment of brca1. The BRCA1-A complex specifically recognizes 'Lys-63'-linked ubiquitinated histones H2A and H2AX at DNA lesion sites, leading to target the brca1-bard1 heterodimer to sites of DNA damage at DSBs. This complex also possesses deubiquitinase activity that specifically removes 'Lys-63'-linked ubiquitin on histones H2A and H2AX. The sequence is that of BRCA1-A complex subunit Abraxas 1 from Xenopus tropicalis (Western clawed frog).